A 775-amino-acid chain; its full sequence is Ubiquitin carboxyl-terminal hydrolase 14 (775 aa).

The segment at 1–108 (MSCPHLTETN…EDLYDYFYVP (108 aa)) adopts a UBP-type 1; degenerate zinc-finger fold. Residues cysteine 25, cysteine 28, cysteine 41, cysteine 44, cysteine 49, histidine 56, histidine 60, histidine 66, cysteine 153, histidine 155, cysteine 174, cysteine 177, cysteine 186, cysteine 189, cysteine 194, histidine 207, histidine 211, histidine 217, cysteine 236, and cysteine 239 each contribute to the Zn(2+) site. The UBP-type 2 zinc finger occupies 151-259 (TTCDHIINLP…THMLNFGIDI (109 aa)). The USP domain occupies 300–774 (TGLKNLGNSC…TGYVYLFERL (475 aa)). The active-site Nucleophile is the cysteine 309. At serine 456 the chain carries Phosphoserine. UBA domains lie at 576–617 (EWNQ…LFEH) and 639–679 (SVSE…ILNH). The active-site Proton acceptor is histidine 730.

It belongs to the peptidase C19 family.

It catalyses the reaction Thiol-dependent hydrolysis of ester, thioester, amide, peptide and isopeptide bonds formed by the C-terminal Gly of ubiquitin (a 76-residue protein attached to proteins as an intracellular targeting signal).. This Schizosaccharomyces pombe (strain 972 / ATCC 24843) (Fission yeast) protein is Ubiquitin carboxyl-terminal hydrolase 14 (ubp14).